The primary structure comprises 245 residues: 8-amino-3,8-dideoxy-manno-octulosonate cytidylyltransferase (245 aa).

It belongs to the KdsB family.

The protein localises to the cytoplasm. It catalyses the reaction 8-amino-3,8-dideoxy-alpha-D-manno-octulosonate + CTP = CMP-8-amino-3,8-dideoxy-alpha-D-manno-oct-2-ulosonate + diphosphate. Its pathway is bacterial outer membrane biogenesis; lipopolysaccharide biosynthesis. Activates KDO8N (a required 8-carbon sugar) for incorporation into bacterial lipopolysaccharide in the Shewanella genus. In Shewanella baltica (strain OS185), this protein is 8-amino-3,8-dideoxy-manno-octulosonate cytidylyltransferase.